Consider the following 524-residue polypeptide: Cytokinin dehydrogenase 7 (524 aa).

The signal sequence occupies residues 1 to 22; it reads MAARCSIAFMIMASCLSVVVSG. N42 carries N-linked (GlcNAc...) asparagine glycosylation. Residues 55–233 enclose the FAD-binding PCMH-type domain; the sequence is VAAAPEAVLH…TRARIGLMPA (179 aa). G91 and G93 together coordinate FAD. H94 is subject to Pros-8alpha-FAD histidine. 2 residues coordinate FAD: S95 and Q99. The N-linked (GlcNAc...) asparagine glycan is linked to N121. 5 residues coordinate FAD: D157, T162, S168, I172, and I223. N-linked (GlcNAc...) asparagine glycans are attached at residues N277 and N320. FAD contacts are provided by Y472, S507, and Q510.

This sequence belongs to the oxygen-dependent FAD-linked oxidoreductase family. Monomer. FAD is required as a cofactor.

Its subcellular location is the secreted. It localises to the extracellular space. It carries out the reaction N(6)-dimethylallyladenine + A + H2O = 3-methyl-2-butenal + adenine + AH2. Its function is as follows. Catalyzes the oxidation of cytokinins, a family of N(6)-substituted adenine derivatives that are plant hormones, where the substituent is an isopentenyl group. The polypeptide is Cytokinin dehydrogenase 7 (CKX7) (Oryza sativa subsp. japonica (Rice)).